A 130-amino-acid chain; its full sequence is Follitropin subunit beta (130 aa).

The signal sequence occupies residues 1–20; sequence MMKSIQLCILLWCLRAVCCH. 6 cysteine pairs are disulfide-bonded: Cys-22-Cys-70, Cys-36-Cys-85, Cys-39-Cys-123, Cys-47-Cys-101, Cys-51-Cys-103, and Cys-106-Cys-113. 2 N-linked (GlcNAc...) asparagine glycosylation sites follow: Asn-26 and Asn-43.

The protein belongs to the glycoprotein hormones subunit beta family. Heterodimer. The active follitropin is a heterodimer composed of an alpha chain/CGA shared with other hormones and a unique beta chain/FSHB shown here.

It is found in the secreted. In terms of biological role, together with the alpha chain CGA constitutes follitropin, the follicle-stimulating hormone, and provides its biological specificity to the hormone heterodimer. Binds FSHR, a G protein-coupled receptor, on target cells to activate downstream signaling pathways. Follitropin is involved in follicle development and spermatogenesis in reproductive organs. In Rattus norvegicus (Rat), this protein is Follitropin subunit beta (Fshb).